Here is a 253-residue protein sequence, read N- to C-terminus: ATP synthase subunit a (253 aa).

Helical transmembrane passes span 34-54, 89-109, 118-138, 156-178, 203-223, and 226-246; these read SSLF…LSFY, YFPF…IGMI, HIVF…LIGI, LAIV…FTLS, LSAG…LLAL, and LELA…CIYL.

The protein belongs to the ATPase A chain family. In terms of assembly, F-type ATPases have 2 components, CF(1) - the catalytic core - and CF(0) - the membrane proton channel. CF(1) has five subunits: alpha(3), beta(3), gamma(1), delta(1), epsilon(1). CF(0) has three main subunits: a, b and c.

It localises to the mitochondrion inner membrane. Functionally, mitochondrial membrane ATP synthase (F(1)F(0) ATP synthase or Complex V) produces ATP from ADP in the presence of a proton gradient across the membrane which is generated by electron transport complexes of the respiratory chain. F-type ATPases consist of two structural domains, F(1) - containing the extramembraneous catalytic core and F(0) - containing the membrane proton channel, linked together by a central stalk and a peripheral stalk. During catalysis, ATP synthesis in the catalytic domain of F(1) is coupled via a rotary mechanism of the central stalk subunits to proton translocation. Key component of the proton channel; it may play a direct role in the translocation of protons across the membrane. This is ATP synthase subunit a (ATP6) from Chondrus crispus (Carrageen Irish moss).